The following is a 448-amino-acid chain: Extracellular serine protease (448 aa).

An N-terminal signal peptide occupies residues 1-20 (MKLSHLSLAIISAITLAACG). A disordered region spans residues 87–109 (KELENQASDDEVDPTKTGVVGNL).

This sequence belongs to the peptidase S17 family. A divalent metal cation serves as cofactor.

In terms of biological role, this enzyme is a chymotrypsin-like serine protease. Degrades a variety of substrates present in the skin and hoof of the sheep, including elastin, keratin, fibrinogen and collagen. It seems to play an important role in the pathogenesis of sheep footrot. This Dichelobacter nodosus (Bacteroides nodosus) protein is Extracellular serine protease (prvA).